We begin with the raw amino-acid sequence, 122 residues long: UPF0344 protein BPUM_1008 (122 aa).

A run of 4 helical transmembrane segments spans residues 5-25 (LHIT…ALAG), 33-53 (IVHM…VELY), 60-80 (IPGF…VIGF), and 93-113 (SVTG…LLGL).

The protein belongs to the UPF0344 family.

The protein localises to the cell membrane. This chain is UPF0344 protein BPUM_1008, found in Bacillus pumilus (strain SAFR-032).